The following is an 87-amino-acid chain: Small ribosomal subunit protein bS18B (87 aa).

The protein belongs to the bacterial ribosomal protein bS18 family. As to quaternary structure, part of the 30S ribosomal subunit. Forms a tight heterodimer with protein bS6.

Its function is as follows. Binds as a heterodimer with protein bS6 to the central domain of the 16S rRNA, where it helps stabilize the platform of the 30S subunit. In Mycolicibacterium vanbaalenii (strain DSM 7251 / JCM 13017 / BCRC 16820 / KCTC 9966 / NRRL B-24157 / PYR-1) (Mycobacterium vanbaalenii), this protein is Small ribosomal subunit protein bS18B.